The primary structure comprises 802 residues: Leucine--tRNA ligase (802 aa).

Positions 40–51 (PYPSGAGLHVGH) match the 'HIGH' region motif. The 'KMSKS' region signature appears at 576–580 (KMSKS). ATP is bound at residue lysine 579.

This sequence belongs to the class-I aminoacyl-tRNA synthetase family.

The protein localises to the cytoplasm. The enzyme catalyses tRNA(Leu) + L-leucine + ATP = L-leucyl-tRNA(Leu) + AMP + diphosphate. This chain is Leucine--tRNA ligase, found in Bacillus cereus (strain ATCC 14579 / DSM 31 / CCUG 7414 / JCM 2152 / NBRC 15305 / NCIMB 9373 / NCTC 2599 / NRRL B-3711).